A 154-amino-acid chain; its full sequence is Probable prefoldin subunit 5 (154 aa).

Belongs to the prefoldin subunit alpha family. Heterohexamer of two PFD-alpha type and four PFD-beta type subunits. Interacts with byr1.

Its subcellular location is the cytoplasm. Binds specifically to cytosolic chaperonin (c-CPN) and transfers target proteins to it. Binds to nascent polypeptide chain and promotes folding in an environment in which there are many competing pathways for nonnative proteins. Required for normal cytoskeletal function and when bound to byr1, is involved in the regulation of sexual differentiation. In Schizosaccharomyces pombe (strain 972 / ATCC 24843) (Fission yeast), this protein is Probable prefoldin subunit 5 (bob1).